We begin with the raw amino-acid sequence, 283 residues long: RNase adapter protein RapZ (283 aa).

Position 8 to 15 (8 to 15 (GRSGSGKS)) interacts with ATP. 56–59 (DVRN) contacts GTP. The tract at residues 266 to 283 (RSRGKNVQSRHRTLEKRK) is RNA-binding.

The protein belongs to the RapZ-like family. RapZ subfamily. In terms of assembly, homotrimer.

In terms of biological role, modulates the synthesis of GlmS, by affecting the processing and stability of the regulatory small RNA GlmZ. When glucosamine-6-phosphate (GlcN6P) concentrations are high in the cell, RapZ binds GlmZ and targets it to cleavage by RNase E. Consequently, GlmZ is inactivated and unable to activate GlmS synthesis. Under low GlcN6P concentrations, RapZ is sequestered and inactivated by an other regulatory small RNA, GlmY, preventing GlmZ degradation and leading to synthesis of GlmS. This chain is RNase adapter protein RapZ, found in Photorhabdus laumondii subsp. laumondii (strain DSM 15139 / CIP 105565 / TT01) (Photorhabdus luminescens subsp. laumondii).